The chain runs to 1782 residues: AF4/FMR2 family member lilli (1782 aa).

Disordered regions lie at residues 42 to 84 (NMED…PSEG), 150 to 313 (ASSS…PPPE), 434 to 515 (MPTP…QQQQ), 605 to 637 (GGSS…NLSR), 691 to 732 (EKLH…QQRY), 768 to 820 (GALP…LQIP), 839 to 891 (KVQP…SNKK), 911 to 1064 (VAAA…AAAS), 1091 to 1126 (AGNS…QHKQ), 1166 to 1234 (LPQS…KQGQ), 1296 to 1327 (ARQH…TPKD), 1386 to 1420 (LKQE…EQLS), 1450 to 1484 (QESA…QQQQ), and 1674 to 1701 (GNTP…GKIV). Basic and acidic residues predominate over residues 54 to 80 (REKYERQQGIQSDDRETSLFGEPRRLN). 2 stretches are compositionally biased toward low complexity: residues 164 to 180 (QQQQ…QQQQ) and 211 to 260 (PSSS…MSSP). Pro residues predominate over residues 435–447 (PTPPKASPTPPAI). Phosphothreonine is present on threonine 443. The segment covering 450–463 (MKTEKNHSLEKQDS) has biased composition (basic and acidic residues). Over residues 465–475 (LENDLELSESD) the composition is skewed to acidic residues. Residues serine 472 and serine 474 each carry the phosphoserine modification. Low complexity-rich tracts occupy residues 484-515 (SAGN…QQQQ) and 609-622 (GSCM…SSSN). The span at 623–634 (KTPSPTDSNRWN) shows a compositional bias: polar residues. A compositionally biased stretch (basic and acidic residues) spans 691–701 (EKLHDEPRHVG). Low complexity-rich tracts occupy residues 714-730 (QQQQ…QQQQ) and 782-805 (SDSG…GGSS). Over residues 859-869 (PRQKKPRKKKM) the composition is skewed to basic residues. 2 positions are modified to phosphoserine: serine 878 and serine 879. Positions 920-932 (KKGRGRPRKQAQQ) form a DNA-binding region, a.T hook. Residues 929–972 (QAQQQQQQQQQQLQQSGNLSSASASSSQAKGPTLTAAKKPLAKA) show a composition bias toward low complexity. 2 positions are modified to phosphoserine: serine 949 and serine 951. Over residues 973 to 982 (SVSNSNSTAP) the composition is skewed to polar residues. Composition is skewed to low complexity over residues 996–1018 (SNSS…TMAA), 1033–1064 (SSSS…AAAS), 1105–1116 (SVGSSSNSSSSS), and 1174–1196 (SSSD…SSSS). Residues 1308-1318 (AQQNGHLSSRS) are compositionally biased toward polar residues. The span at 1450-1460 (QESAANGSPNK) shows a compositional bias: polar residues. Serine 1457 bears the Phosphoserine mark. Composition is skewed to low complexity over residues 1461–1484 (LQQQ…QQQQ) and 1674–1694 (GNTP…SGSN).

Belongs to the AF4 family.

Its subcellular location is the nucleus. Has a role in transcriptional regulation. Acts in parallel with the Ras/MAPK and the PI3K/PKB pathways in the control of cell identity and cellular growth. Essential for regulation of the cytoskeleton and cell growth but not for cell proliferation or growth rate. Required specifically for the microtubule-based basal transport of lipid droplets. Plays a partially redundant function downstream of Raf in cell fate specification in the developing eye. Pair-rule protein that regulates embryonic cellularization, gastrulation and segmentation. The chain is AF4/FMR2 family member lilli from Drosophila mojavensis (Fruit fly).